The primary structure comprises 527 residues: MKEAVKTVKPKVPAKKRIVTGSKTKKKVFVKKKPPAKKPPDKKPLKKTTKKTVKKVINRPKSIHIPNKDLKIFKWIPTPKKEFTEIETNSWYEHRKFENPNKSPIQTYNKIVPVVPPESIKQQNLANKRKKTNRPIVFISSEKIRIYPTKEQQKILQTWFRLFACMYNSSIDYINSKKVVLESGRINVAATRKVCNKISVRKALKTIRDNLIKSTNPSIMTHIMDEAIGLACSNYKTCLTNYIEGQIKKFDIKPWSISKRRKIIVIEPGYFKGNSFCPTVFPKMKSSKPLIMIDKTVTLQYDSDTRKYILFVPRVTPKYSVNKEKNSCGIDPGLRDFLTVYSENETQSICPIEIVVNTTKNEYKKIDKINEIIKTKPNLNSKRKKKLNRGLRKYHRRVTNKMKDMHYKVSHELVNTFDKICIGKLNVKSILSKANTVLKSALKRKLATLSFYRFTQRLTHMGYKYGTEVVNVNEYLTTKTCSNCGKIKDLGASKIYECESCGMYADRDENAAKNILKVGLKPWYKQK.

Residues G21 to A36 show a composition bias toward basic residues. Residues G21 to K50 are disordered. Zn(2+) is bound by residues C481, C484, C498, and C501.

The protein in the central section; belongs to the transposase 2 family. It in the C-terminal section; belongs to the transposase 35 family.

This Acanthamoeba polyphaga mimivirus (APMV) protein is TnpB-like protein R854.